We begin with the raw amino-acid sequence, 312 residues long: Very-long-chain 3-oxoacyl-CoA reductase-like protein At1g24470 (312 aa).

A helical transmembrane segment spans residues 14-34 (LHFVCFIGFLFLLRVLFIPLL). Residue 52-81 (GSWAMVTGATEGIGRAFAHELAKHGLNLIL) coordinates NADP(+). Residue S190 coordinates substrate. Catalysis depends on Y205, which acts as the Proton acceptor.

The protein belongs to the short-chain dehydrogenases/reductases (SDR) family. Expressed in green siliques, flowers, inflorescence stems and leaves. Not detected in roots.

The protein resides in the endoplasmic reticulum membrane. Its function is as follows. Probable reductase, but unlike KCR1, has no beta-ketoacyl-coenzyme A reductase activity. The sequence is that of Very-long-chain 3-oxoacyl-CoA reductase-like protein At1g24470 (KCR2) from Arabidopsis thaliana (Mouse-ear cress).